The following is a 299-amino-acid chain: tRNA uridine(34) hydroxylase (299 aa).

The 95-residue stretch at 132 to 226 folds into the Rhodanese domain; that stretch reads AGRPVVMLDT…YFEEVGGAHY (95 aa). The Cysteine persulfide intermediate role is filled by Cys-186.

This sequence belongs to the TrhO family.

The enzyme catalyses uridine(34) in tRNA + AH2 + O2 = 5-hydroxyuridine(34) in tRNA + A + H2O. In terms of biological role, catalyzes oxygen-dependent 5-hydroxyuridine (ho5U) modification at position 34 in tRNAs. This Burkholderia mallei (strain NCTC 10247) protein is tRNA uridine(34) hydroxylase.